The chain runs to 360 residues: Peptide chain release factor 1 (360 aa).

At glutamine 235 the chain carries N5-methylglutamine. Residues 285–305 are disordered; it reads KRQEAEASERRNLLGSGDRSD.

The protein belongs to the prokaryotic/mitochondrial release factor family. Post-translationally, methylated by PrmC. Methylation increases the termination efficiency of RF1.

It is found in the cytoplasm. In terms of biological role, peptide chain release factor 1 directs the termination of translation in response to the peptide chain termination codons UAG and UAA. This Proteus mirabilis (strain HI4320) protein is Peptide chain release factor 1.